Reading from the N-terminus, the 471-residue chain is UDP-glycosyltransferase 71A15 (471 aa).

UDP-alpha-D-glucose is bound by residues S282, 348–349 (WA), 366–374 (HCGWNSTLE), and 388–391 (YAEQ).

It belongs to the UDP-glycosyltransferase family.

Functionally, glycosyltransferase that possesses chalcone and flavonol 2'-O-glycosyltransferase activity. Converts phloretin to phlorizin (phloretin 2'-O-glucoside), a potent antioxidant. Possesses glycosyltransferase activity toward, naringenin, naringenin chalcone, eriodictyol, eriodictyol chalcone, apigenin, luteolin, kaempferol, quercetin, isoliquiritigenin, butein and caffeic acid. Can convert phloretin to phloretin 4'-O-glucoside and phloretin 4-O-glucoside. This Malus domestica (Apple) protein is UDP-glycosyltransferase 71A15.